We begin with the raw amino-acid sequence, 528 residues long: Oxamate amidohydrolase proenzyme (528 aa).

The Nucleophile role is filled by Thr-342. Residue 424–425 (GG) coordinates substrate.

The protein belongs to the gamma-glutamyltransferase family. Heterodimer that consists of a 35.5 kDa large (alpha) subunit and a 20 kDa small (beta) subunit, which are synthesized from a single polypeptide. Post-translationally, cleaved by autocatalysis into a large (alpha) and a small (beta) subunit.

The catalysed reaction is oxamate + H2O = oxalate + NH4(+). Its function is as follows. Involved in the uric acid degradation pathway. Catalyzes the conversion of oxamate to oxalate. The sequence is that of Oxamate amidohydrolase proenzyme from Klebsiella pneumoniae subsp. pneumoniae (strain ATCC 700721 / MGH 78578).